We begin with the raw amino-acid sequence, 517 residues long: Protein translocase subunit SecD (517 aa).

The next 6 membrane-spanning stretches (helical) occupy residues 5-25 (LRWI…FPLD), 357-377 (IWAG…YYKF), 380-400 (FIAS…MGMF), 407-427 (PGIA…VLIF), 455-475 (IIDS…FGTG), and 479-499 (GFAV…VTLS).

This sequence belongs to the SecD/SecF family. SecD subfamily. In terms of assembly, forms a complex with SecF. Part of the essential Sec protein translocation apparatus which comprises SecA, SecYEG and auxiliary proteins SecDF. Other proteins may also be involved.

Its subcellular location is the cell inner membrane. Functionally, part of the Sec protein translocase complex. Interacts with the SecYEG preprotein conducting channel. SecDF uses the proton motive force (PMF) to complete protein translocation after the ATP-dependent function of SecA. The protein is Protein translocase subunit SecD of Calditerrivibrio nitroreducens (strain DSM 19672 / NBRC 101217 / Yu37-1).